An 878-amino-acid chain; its full sequence is Phosphoenolpyruvate carboxylase (878 aa).

Residues His-138 and Lys-545 contribute to the active site.

This sequence belongs to the PEPCase type 1 family. Mg(2+) is required as a cofactor.

The catalysed reaction is oxaloacetate + phosphate = phosphoenolpyruvate + hydrogencarbonate. In terms of biological role, forms oxaloacetate, a four-carbon dicarboxylic acid source for the tricarboxylic acid cycle. The chain is Phosphoenolpyruvate carboxylase from Shewanella halifaxensis (strain HAW-EB4).